Reading from the N-terminus, the 320-residue chain is tRNA dimethylallyltransferase (320 aa).

Gly5–Ser12 contributes to the ATP binding site. Thr7–Ser12 contributes to the substrate binding site. The interval Asp30–Gln33 is interaction with substrate tRNA.

The protein belongs to the IPP transferase family. Monomer. Mg(2+) serves as cofactor.

It catalyses the reaction adenosine(37) in tRNA + dimethylallyl diphosphate = N(6)-dimethylallyladenosine(37) in tRNA + diphosphate. Its function is as follows. Catalyzes the transfer of a dimethylallyl group onto the adenine at position 37 in tRNAs that read codons beginning with uridine, leading to the formation of N6-(dimethylallyl)adenosine (i(6)A). This chain is tRNA dimethylallyltransferase, found in Heliobacterium modesticaldum (strain ATCC 51547 / Ice1).